We begin with the raw amino-acid sequence, 237 residues long: Sugar fermentation stimulation protein homolog (237 aa).

Belongs to the SfsA family.

This Pseudomonas putida (strain ATCC 47054 / DSM 6125 / CFBP 8728 / NCIMB 11950 / KT2440) protein is Sugar fermentation stimulation protein homolog.